The primary structure comprises 472 residues: PEP-dependent dihydroxyacetone kinase, phosphoryl donor subunit DhaM (472 aa).

The 135-residue stretch at 1-135 (MVNLVIVSHS…HALEAKREQL (135 aa)) folds into the PTS EIIA type-4 domain. The Tele-phosphohistidine intermediate role is filled by His9. In terms of domain architecture, HPr spans 155-242 (ARSLAVVIKN…QLAEDNFGET (88 aa)). The active-site Pros-phosphohistidine intermediate is His169. The interval 264 to 472 (QPVLCTVQAK…VKTQRFNRQG (209 aa)) is PTS EI-like, N-terminal part. The active-site Tele-phosphohistidine intermediate is the His430.

The protein belongs to the PEP-utilizing enzyme family. In terms of assembly, homodimer. The dihydroxyacetone kinase complex is composed of a homodimer of DhaM, a homodimer of DhaK and the subunit DhaL.

It carries out the reaction dihydroxyacetone + phosphoenolpyruvate = dihydroxyacetone phosphate + pyruvate. The protein operates within polyol metabolism; glycerol degradation. Component of the dihydroxyacetone kinase complex, which is responsible for the phosphoenolpyruvate (PEP)-dependent phosphorylation of dihydroxyacetone. DhaM serves as the phosphoryl donor. Is phosphorylated by phosphoenolpyruvate in an EI- and HPr-dependent reaction, and a phosphorelay system on histidine residues finally leads to phosphoryl transfer to DhaL and dihydroxyacetone. The protein is PEP-dependent dihydroxyacetone kinase, phosphoryl donor subunit DhaM of Escherichia coli (strain K12).